The following is a 66-amino-acid chain: Large ribosomal subunit protein uL29 (66 aa).

This sequence belongs to the universal ribosomal protein uL29 family. As to quaternary structure, part of the 50S ribosomal subunit.

This Thermococcus kodakarensis (strain ATCC BAA-918 / JCM 12380 / KOD1) (Pyrococcus kodakaraensis (strain KOD1)) protein is Large ribosomal subunit protein uL29.